A 95-amino-acid polypeptide reads, in one-letter code: Feather keratin B-4 (95 aa).

The residue at position 1 (Ser1) is an N-acetylserine.

It belongs to the avian keratin family. The avian keratins (F-ker, S-ker, C-ker and B-ker) are a complex mixture of very similar polypeptides.

This chain is Feather keratin B-4, found in Anas platyrhynchos (Mallard).